The following is a 657-amino-acid chain: Glycogen debranching enzyme (657 aa).

Residue D336 is the Nucleophile of the active site. The Proton donor role is filled by E371. The interval 460 to 479 is disordered; that stretch reads ANGEENRDGTNNNYSNNHGK.

Belongs to the glycosyl hydrolase 13 family.

It carries out the reaction Hydrolysis of (1-&gt;6)-alpha-D-glucosidic linkages to branches with degrees of polymerization of three or four glucose residues in limit dextrin.. Its pathway is glycan degradation; glycogen degradation. Removes maltotriose and maltotetraose chains that are attached by 1,6-alpha-linkage to the limit dextrin main chain, generating a debranched limit dextrin. This Escherichia coli (strain UTI89 / UPEC) protein is Glycogen debranching enzyme.